The primary structure comprises 1173 residues: Pumilio homolog 2 (1173 aa).

Disordered regions lie at residues 41-68 (VSSAGQAHGNNPHAMPPGAPSAQVPLSG), 265-296 (VSKLNGRGLPNGIESDCKDFNRTPGSRQASPT), 480-518 (QQAATQASQGQQQVMRATSNQRPLTPNQAQQGQQPESLA), 592-662 (LTGA…SLGF), and 730-759 (PISMPLPSQTSGHSLTPPPSLSSHGSSSSL). Polar residues predominate over residues 287 to 296 (TPGSRQASPT). Residues 480–492 (QQAATQASQGQQQ) are compositionally biased toward low complexity. The segment covering 493 to 518 (VMRATSNQRPLTPNQAQQGQQPESLA) has biased composition (polar residues). Residues 606–622 (QQQQQQQQQQHQQQQQQ) are compositionally biased toward low complexity. Polar residues predominate over residues 623-633 (PNANLHSNSFY). The span at 634 to 657 (GNSTMSNNSQSSSLFSPGPGQPGS) shows a compositional bias: low complexity. The PUM-HD domain maps to 815–1155 (GRSRLLEDFR…HILAKLEKYY (341 aa)). Pumilio repeat units follow at residues 835–870 (DLMGHIVEFSQDQHGSRFIQQKLERASPAERQLVFS), 871–906 (EILQAAYQLMTDVFGNYVIQKFFEFGSMDQKLALAT), 907–942 (RIRGHVLPLALQMYGCRVIQKALESISTDQQSEMVR), 943–978 (ELDGHVLKCVKDQNGNHVVQKCIECVTPQSLHFIIE), 979–1014 (AFKGQVYVLSTHPYGCRVIQRILEHCTPEQTLPILE), 1015–1050 (ELHQSTEQLVQDQYGNYVIQHVLEHGRSDDKSKIVC), 1051–1086 (EVRGQVLVLSQHKFASNVVEKCVTHSSRTERAFLID), 1087–1129 (EICC…IIMH), and 1130–1167 (KIRPHITTLRKYTYGKHILAKLEKYYMKNSPDLGLLVG). The segment at 850 to 854 (SRFIQ) is adenine-nucleotide binding in RNA target. Positions 886–890 (NYVIQ) are uracil-nucleotide binding in RNA target. Residues 922 to 926 (CRVIQ) are adenine-nucleotide binding in RNA target. Positions 958 to 962 (NHVVQ) are non-specific-nucleotide binding in RNA target. Residues 994–998 (CRVIQ) form an adenine-nucleotide binding in RNA target region. The uracil-nucleotide binding in RNA target stretch occupies residues 1030–1034 (NYVIQ). The interval 1066 to 1070 (SNVVE) is guanine-nucleotide binding in RNA target. Residues 1109–1113 (NYVVQ) form a uracil-nucleotide binding in RNA target region.

As to quaternary structure, component of a complex with papd4, sympk, tacc3, parn, dazl and cpeb1. In terms of processing, phosphorylated.

It is found in the cytoplasm. The protein localises to the P-body. The protein resides in the cytoplasmic granule. Functionally, sequence-specific RNA-binding protein that acts as a post-transcriptional repressor by binding the 3'-UTR of mRNA targets. Binds to an RNA consensus sequence, the Pumilio Response Element (PRE), 5'-UGUANAUA-3', that is related to the Nanos Response Element (NRE). Mediates post-transcriptional repression of transcripts via different mechanisms: acts via direct recruitment of deadenylase complexes leading to translational inhibition and mRNA degradation. Also mediates deadenylation-independent repression by promoting accessibility of miRNAs. This Xenopus laevis (African clawed frog) protein is Pumilio homolog 2 (pum2).